Consider the following 445-residue polypeptide: Cholesterol side-chain cleavage enzyme, mitochondrial (445 aa).

Residues 1–36 (RGLPSRSVFLRGCQASLSTAQERLGHPGVPTREGVR) constitute a mitochondrion transit peptide.

This sequence belongs to the cytochrome P450 family. In terms of assembly, interacts with FDX1/adrenodoxin. The cofactor is heme.

It localises to the mitochondrion inner membrane. The enzyme catalyses 6 reduced [adrenodoxin] + cholesterol + 3 O2 + 6 H(+) = 4-methylpentanal + pregnenolone + 6 oxidized [adrenodoxin] + 4 H2O. It carries out the reaction 2 reduced [adrenodoxin] + cholesterol + O2 + 2 H(+) = (22R)-hydroxycholesterol + 2 oxidized [adrenodoxin] + H2O. The catalysed reaction is (22R)-hydroxycholesterol + 2 reduced [adrenodoxin] + O2 + 2 H(+) = (20R,22R)-20,22-dihydroxycholesterol + 2 oxidized [adrenodoxin] + H2O. It catalyses the reaction (20R,22R)-20,22-dihydroxycholesterol + 2 reduced [adrenodoxin] + O2 + 2 H(+) = 4-methylpentanal + pregnenolone + 2 oxidized [adrenodoxin] + 2 H2O. Its pathway is lipid metabolism; C21-steroid hormone metabolism. The protein operates within steroid metabolism; cholesterol metabolism. Its function is as follows. A cytochrome P450 monooxygenase that catalyzes the side-chain hydroxylation and cleavage of cholesterol to pregnenolone, the precursor of most steroid hormones. Catalyzes three sequential oxidation reactions of cholesterol, namely the hydroxylation at C22 followed with the hydroxylation at C20 to yield 20R,22R-hydroxycholesterol that is further cleaved between C20 and C22 to yield the C21-steroid pregnenolone and 4-methylpentanal. Mechanistically, uses molecular oxygen inserting one oxygen atom into a substrate and reducing the second into a water molecule. Two electrons are provided by NADPH via a two-protein mitochondrial transfer system comprising flavoprotein FDXR (adrenodoxin/ferredoxin reductase) and nonheme iron-sulfur protein FDX1 or FDX2 (adrenodoxin/ferredoxin). This Oryctolagus cuniculus (Rabbit) protein is Cholesterol side-chain cleavage enzyme, mitochondrial (CYP11A1).